The chain runs to 327 residues: Thioredoxin reductase sirT (327 aa).

FAD contacts are provided by residues 15–18 (AGPA), 37–42 (DTGVFR), His-50, and Ala-115. A disulfide bridge connects residues Cys-139 and Cys-142. FAD contacts are provided by residues Asp-289 and 296–297 (QV).

It belongs to the class-II pyridine nucleotide-disulfide oxidoreductase family. In terms of assembly, homodimer. It depends on FAD as a cofactor.

Its pathway is mycotoxin biosynthesis. Thioredoxin reductase; part of the gene cluster that mediates the biosynthesis of sirodesmin PL, an epipolythiodioxopiperazine (ETP) characterized by a disulfide bridged cyclic dipeptide and that acts as a phytotoxin which is involved in the blackleg didease of canola. SirD catalyzes the O-prenylation of L-tyrosine (L-Tyr) in the presence of dimethylallyl diphosphate (DMAPP) to yield 4-O-dimethylallyl-L-Tyr, and therefore represents probably the first pathway-specific enzyme in the biosynthesis of sirodesmin PL. 4-O-dimethylallyl-L-Tyr, then undergoes condensation with L-Ser in a reaction catalyzed by the non-ribosomal peptide synthase sirP to form the diketopiperazine (DKP) backbone. Further bishydroxylation of the DKP performed by the cytochrome P450 monooxygenase sirC leads to the production of the intermediate phomamide. This step is essential to form the reactive thiol group required for toxicity of sirodesmin PL. The next steps of sirodesmin biosynthesis are not well understood yet, but some predictions could be made from intermediate compounds identification. Phomamide is converted into phomalizarine via oxidation, probably by sirT. Further oxidation, methylation (by sirM or sirN) and reduction steps convert phomalizarine to deacetyl sirodesmin. Finally, acetyltransferase sirH probably acetylates deacetyl sirodesmin to produce sirodesmin PL. The polypeptide is Thioredoxin reductase sirT (Leptosphaeria maculans (Blackleg fungus)).